We begin with the raw amino-acid sequence, 131 residues long: uncharacterized protein (131 aa).

Positions 99–131 (NAIQEEEIDMEQQEEKEEKPREKGKKKSVEEEF) are disordered. Residues 102-113 (QEEEIDMEQQEE) show a composition bias toward acidic residues. The span at 114–131 (KEEKPREKGKKKSVEEEF) shows a compositional bias: basic and acidic residues.

This is an uncharacterized protein from Sulfolobus islandicus rod-shaped virus 1 (SIRV-1).